The sequence spans 302 residues: Bifunctional protein FolD (302 aa).

NADP(+) is bound by residues 165–167 (GRS), S190, and I231.

Belongs to the tetrahydrofolate dehydrogenase/cyclohydrolase family. Homodimer.

It carries out the reaction (6R)-5,10-methylene-5,6,7,8-tetrahydrofolate + NADP(+) = (6R)-5,10-methenyltetrahydrofolate + NADPH. The catalysed reaction is (6R)-5,10-methenyltetrahydrofolate + H2O = (6R)-10-formyltetrahydrofolate + H(+). Its pathway is one-carbon metabolism; tetrahydrofolate interconversion. Functionally, catalyzes the oxidation of 5,10-methylenetetrahydrofolate to 5,10-methenyltetrahydrofolate and then the hydrolysis of 5,10-methenyltetrahydrofolate to 10-formyltetrahydrofolate. The sequence is that of Bifunctional protein FolD from Prochlorococcus marinus (strain MIT 9211).